Reading from the N-terminus, the 488-residue chain is UDP-N-acetylmuramoyl-L-alanyl-D-glutamate--2,6-diaminopimelate ligase (488 aa).

UDP-N-acetyl-alpha-D-muramoyl-L-alanyl-D-glutamate is bound by residues Leu24, Ser26, and 41–43; that span reads HQV. 113 to 119 provides a ligand contact to ATP; it reads GTNGKTT. UDP-N-acetyl-alpha-D-muramoyl-L-alanyl-D-glutamate is bound by residues Asn154, 155-156, Ser182, Gln188, and Arg190; that span reads TT. Lys222 carries the post-translational modification N6-carboxylysine. Residues Arg386, 410-413, Gly461, and Glu465 each bind meso-2,6-diaminopimelate; that span reads DNPR. The Meso-diaminopimelate recognition motif signature appears at 410–413; the sequence is DNPR.

The protein belongs to the MurCDEF family. MurE subfamily. Mg(2+) is required as a cofactor. In terms of processing, carboxylation is probably crucial for Mg(2+) binding and, consequently, for the gamma-phosphate positioning of ATP.

The protein localises to the cytoplasm. It catalyses the reaction UDP-N-acetyl-alpha-D-muramoyl-L-alanyl-D-glutamate + meso-2,6-diaminopimelate + ATP = UDP-N-acetyl-alpha-D-muramoyl-L-alanyl-gamma-D-glutamyl-meso-2,6-diaminopimelate + ADP + phosphate + H(+). It participates in cell wall biogenesis; peptidoglycan biosynthesis. Its function is as follows. Catalyzes the addition of meso-diaminopimelic acid to the nucleotide precursor UDP-N-acetylmuramoyl-L-alanyl-D-glutamate (UMAG) in the biosynthesis of bacterial cell-wall peptidoglycan. The protein is UDP-N-acetylmuramoyl-L-alanyl-D-glutamate--2,6-diaminopimelate ligase of Haemophilus influenzae (strain PittGG).